The sequence spans 786 residues: LPS-assembly protein LptD (786 aa).

The signal sequence occupies residues 1–24 (MKKRIPTLLATMIASALYSHQGLA). Disulfide bonds link Cys-31–Cys-726 and Cys-173–Cys-727.

It belongs to the LptD family. In terms of assembly, component of the lipopolysaccharide transport and assembly complex. Interacts with LptE and LptA. Contains two intramolecular disulfide bonds.

It localises to the cell outer membrane. In terms of biological role, together with LptE, is involved in the assembly of lipopolysaccharide (LPS) at the surface of the outer membrane. The protein is LPS-assembly protein LptD of Salmonella choleraesuis (strain SC-B67).